The chain runs to 410 residues: Riboflavin biosynthesis protein RibBA (410 aa).

The tract at residues 1-205 (MENKRIDTIE…IKDLVAFQMR (205 aa)) is DHBP synthase. D-ribulose 5-phosphate contacts are provided by residues 30-31 (RE), D35, 144-148 (RVGHT), and E168. Residue E31 coordinates Mg(2+). Residue H147 coordinates Mg(2+). The interval 206–410 (RSKLVQRAVE…ISCSCGSGNH (205 aa)) is GTP cyclohydrolase II. Position 256–260 (256–260 (RVHSQ)) interacts with GTP. Zn(2+)-binding residues include C261, C272, and C274. GTP-binding positions include Q277, 299–301 (EGR), and T321. D333 acts as the Proton acceptor; for GTP cyclohydrolase activity in catalysis. Catalysis depends on R335, which acts as the Nucleophile; for GTP cyclohydrolase activity. GTP-binding residues include T356 and K361.

In the N-terminal section; belongs to the DHBP synthase family. The protein in the C-terminal section; belongs to the GTP cyclohydrolase II family. Requires Mg(2+) as cofactor. The cofactor is Mn(2+). Zn(2+) serves as cofactor.

It carries out the reaction D-ribulose 5-phosphate = (2S)-2-hydroxy-3-oxobutyl phosphate + formate + H(+). The catalysed reaction is GTP + 4 H2O = 2,5-diamino-6-hydroxy-4-(5-phosphoribosylamino)-pyrimidine + formate + 2 phosphate + 3 H(+). It participates in cofactor biosynthesis; riboflavin biosynthesis; 2-hydroxy-3-oxobutyl phosphate from D-ribulose 5-phosphate: step 1/1. It functions in the pathway cofactor biosynthesis; riboflavin biosynthesis; 5-amino-6-(D-ribitylamino)uracil from GTP: step 1/4. Catalyzes the conversion of D-ribulose 5-phosphate to formate and 3,4-dihydroxy-2-butanone 4-phosphate. Functionally, catalyzes the conversion of GTP to 2,5-diamino-6-ribosylamino-4(3H)-pyrimidinone 5'-phosphate (DARP), formate and pyrophosphate. The chain is Riboflavin biosynthesis protein RibBA from Chlorobium phaeovibrioides (strain DSM 265 / 1930) (Prosthecochloris vibrioformis (strain DSM 265)).